The sequence spans 160 residues: Transcription elongation factor GreA (160 aa).

Positions 4-70 (QKQYPMTQEG…IEQDIQRIEH (67 aa)) form a coiled coil.

It belongs to the GreA/GreB family.

Necessary for efficient RNA polymerase transcription elongation past template-encoded arresting sites. The arresting sites in DNA have the property of trapping a certain fraction of elongating RNA polymerases that pass through, resulting in locked ternary complexes. Cleavage of the nascent transcript by cleavage factors such as GreA or GreB allows the resumption of elongation from the new 3'terminus. GreA releases sequences of 2 to 3 nucleotides. In Staphylococcus carnosus (strain TM300), this protein is Transcription elongation factor GreA.